The primary structure comprises 680 residues: DNA-directed RNA polymerase subunit beta' (680 aa).

4 residues coordinate Zn(2+): cysteine 69, cysteine 71, cysteine 87, and cysteine 90. Aspartate 489, aspartate 491, and aspartate 493 together coordinate Mg(2+).

This sequence belongs to the RNA polymerase beta' chain family. RpoC1 subfamily. In plastids the minimal PEP RNA polymerase catalytic core is composed of four subunits: alpha, beta, beta', and beta''. When a (nuclear-encoded) sigma factor is associated with the core the holoenzyme is formed, which can initiate transcription. Mg(2+) is required as a cofactor. It depends on Zn(2+) as a cofactor.

It is found in the plastid. The protein localises to the chloroplast. The enzyme catalyses RNA(n) + a ribonucleoside 5'-triphosphate = RNA(n+1) + diphosphate. Functionally, DNA-dependent RNA polymerase catalyzes the transcription of DNA into RNA using the four ribonucleoside triphosphates as substrates. The chain is DNA-directed RNA polymerase subunit beta' from Nandina domestica (Heavenly bamboo).